A 334-amino-acid chain; its full sequence is Tryptophan--tRNA ligase (334 aa).

Residues 11-13 and 19-20 contribute to the ATP site; these read QPT and GN. The short motif at 12–20 is the 'HIGH' region element; sequence PTGKLTIGN. Position 135 (aspartate 135) interacts with L-tryptophan. Residues 147–149, isoleucine 186, and 195–199 contribute to the ATP site; these read GED and KMSKS. Residues 195–199 carry the 'KMSKS' region motif; sequence KMSKS.

Belongs to the class-I aminoacyl-tRNA synthetase family. Homodimer.

The protein resides in the cytoplasm. The catalysed reaction is tRNA(Trp) + L-tryptophan + ATP = L-tryptophyl-tRNA(Trp) + AMP + diphosphate + H(+). Catalyzes the attachment of tryptophan to tRNA(Trp). This chain is Tryptophan--tRNA ligase, found in Blochmanniella floridana.